The primary structure comprises 165 residues: UPF0303 protein BTH_I2506 (165 aa).

The protein belongs to the UPF0303 family.

This is UPF0303 protein BTH_I2506 from Burkholderia thailandensis (strain ATCC 700388 / DSM 13276 / CCUG 48851 / CIP 106301 / E264).